A 132-amino-acid chain; its full sequence is Small ribosomal subunit protein uS8 (132 aa).

This sequence belongs to the universal ribosomal protein uS8 family. Part of the 30S ribosomal subunit. Contacts proteins S5 and S12.

One of the primary rRNA binding proteins, it binds directly to 16S rRNA central domain where it helps coordinate assembly of the platform of the 30S subunit. This Geotalea daltonii (strain DSM 22248 / JCM 15807 / FRC-32) (Geobacter daltonii) protein is Small ribosomal subunit protein uS8.